Consider the following 291-residue polypeptide: ATP synthase gamma chain (291 aa).

The protein belongs to the ATPase gamma chain family. F-type ATPases have 2 components, CF(1) - the catalytic core - and CF(0) - the membrane proton channel. CF(1) has five subunits: alpha(3), beta(3), gamma(1), delta(1), epsilon(1). CF(0) has three main subunits: a, b and c.

Its subcellular location is the cell inner membrane. In terms of biological role, produces ATP from ADP in the presence of a proton gradient across the membrane. The gamma chain is believed to be important in regulating ATPase activity and the flow of protons through the CF(0) complex. The polypeptide is ATP synthase gamma chain (Caulobacter vibrioides (strain NA1000 / CB15N) (Caulobacter crescentus)).